Consider the following 230-residue polypeptide: Probable GTP-binding protein EngB (230 aa).

The region spanning 36–224 (ERPKVIVMGR…KHRINKRINI (189 aa)) is the EngB-type G domain. GTP-binding positions include 44-51 (GRSNVGKS), 69-73 (GVTLK), 86-89 (DLPG), 166-169 (NKMD), and 201-203 (VPA). Positions 51 and 71 each coordinate Mg(2+).

Belongs to the TRAFAC class TrmE-Era-EngA-EngB-Septin-like GTPase superfamily. EngB GTPase family. Requires Mg(2+) as cofactor.

Functionally, necessary for normal cell division and for the maintenance of normal septation. The protein is Probable GTP-binding protein EngB of Methanococcus maripaludis (strain DSM 14266 / JCM 13030 / NBRC 101832 / S2 / LL).